Here is a 51-residue protein sequence, read N- to C-terminus: Bacteriochlorophyll e-binding protein (51 aa).

Residue histidine 25 participates in a bacteriochlorophyll e binding.

It belongs to the BChl C/E-binding protein family.

Its subcellular location is the chlorosome. It is found in the chlorosome envelope. Component of the photosynthetic apparatus. The light harvesting B740 complex binds bacteriochlorophyll e. This is Bacteriochlorophyll e-binding protein (csmA) from Chlorobium phaeovibrioides.